The primary structure comprises 615 residues: 1-deoxy-D-xylulose-5-phosphate synthase (615 aa).

Residues H76 and 117-119 (GHS) contribute to the thiamine diphosphate site. D148 serves as a coordination point for Mg(2+). Residues 149–150 (GA), N177, Y284, and E365 each bind thiamine diphosphate. N177 contributes to the Mg(2+) binding site.

This sequence belongs to the transketolase family. DXPS subfamily. Homodimer. It depends on Mg(2+) as a cofactor. Thiamine diphosphate is required as a cofactor.

It carries out the reaction D-glyceraldehyde 3-phosphate + pyruvate + H(+) = 1-deoxy-D-xylulose 5-phosphate + CO2. It participates in metabolic intermediate biosynthesis; 1-deoxy-D-xylulose 5-phosphate biosynthesis; 1-deoxy-D-xylulose 5-phosphate from D-glyceraldehyde 3-phosphate and pyruvate: step 1/1. Its function is as follows. Catalyzes the acyloin condensation reaction between C atoms 2 and 3 of pyruvate and glyceraldehyde 3-phosphate to yield 1-deoxy-D-xylulose-5-phosphate (DXP). The chain is 1-deoxy-D-xylulose-5-phosphate synthase from Francisella tularensis subsp. holarctica (strain FTNF002-00 / FTA).